Consider the following 298-residue polypeptide: Cholesterol 25-hydroxylase (298 aa).

N-linked (GlcNAc...) asparagine glycosylation is present at N5. The next 3 helical transmembrane spans lie at 38–58 (FFPV…FVVL), 84–104 (LLPC…PVTL), and 124–144 (LLSH…AWHL). One can recognise a Fatty acid hydroxylase domain in the interval 128-263 (VLICLLLFDT…FTHWDKMLGT (136 aa)). The short motif at 142 to 146 (WHLLH) is the Histidine box-1 element. The short motif at 157–161 (HKVHH) is the Histidine box-2 element. Residue N163 is glycosylated (N-linked (GlcNAc...) asparagine). 2 consecutive transmembrane segments (helical) span residues 167 to 187 (FALA…FFDV) and 190 to 210 (VAML…NIWL). The short motif at 238-244 (HHDLHHS) is the Histidine box-3 element.

Belongs to the sterol desaturase family. It depends on Fe cation as a cofactor. Post-translationally, N-glycosylated. In terms of tissue distribution, expressed in testicular macrophages at all stages, with the highest level in 10 day old animals.

It localises to the endoplasmic reticulum membrane. The enzyme catalyses cholesterol + AH2 + O2 = 25-hydroxycholesterol + A + H2O. It carries out the reaction cholesterol + NADPH + O2 + H(+) = 25-hydroxycholesterol + NADP(+) + H2O. Catalyzes the formation of 25-hydroxycholesterol from cholesterol, leading to repress cholesterol biosynthetic enzymes. Plays a key role in cell positioning and movement in lymphoid tissues: 25-hydroxycholesterol is an intermediate in biosynthesis of 7-alpha,25-dihydroxycholesterol (7-alpha,25-OHC), an oxysterol that acts as a ligand for the G protein-coupled receptor GPR183/EBI2, a chemotactic receptor for a number of lymphoid cells. May play an important role in regulating lipid metabolism by synthesizing a corepressor that blocks sterol regulatory element binding protein (SREBP) processing. In testis, production of 25-hydroxycholesterol by macrophages plays a role in Leydig cell differentiation. Required to restrain inflammation in macrophages: production of 25-hydroxycholesterol protects macrophages from cholesterol overload, thereby preventing mitochondrial DNA release and subsequent activation of the AIM2 inflammasome. Interferon-stimulated gene which has broad antiviral activities against a wide range of enveloped viruses. Its function is as follows. Catalyzes the formation of 25-hydroxycholesterol from cholesterol, leading to repress cholesterol biosynthetic enzymes. Plays a key role in cell positioning and movement in lymphoid tissues: 25-hydroxycholesterol is an intermediate in biosynthesis of 7-alpha,25-dihydroxycholesterol (7-alpha,25-OHC), an oxysterol that acts as a ligand for the G protein-coupled receptor GPR183/EBI2, a chemotactic receptor for a number of lymphoid cells. May play an important role in regulating lipid metabolism by synthesizing a corepressor that blocks sterol regulatory element binding protein (SREBP) processing. As an interferon-stimulated gene, has broad antiviral activities against a wide range of enveloped viruses. Its product, 25-hydroxycholesterol, activates the ER-localized enzyme ACAT to induce internalization of accessible cholesterol on the plasma membrane and restricts virus-host membranes fusion which inhibits virus replication. In testis, production of 25-hydroxycholesterol by macrophages plays a role in Leydig cell differentiation. This chain is Cholesterol 25-hydroxylase, found in Rattus norvegicus (Rat).